The following is a 178-amino-acid chain: MLKGAIAQRYAQALFELAVQENLDGIEAELQELVQCVEQNAEVAHVLYHPHISLSEKKDLMNKIFAGELSVTVRNFLNLLIDRRRQNYLLEIARVFARLADEARNIVEAKVASAIPLSETQEQRLHQELARMTGKNVRMVKEVRPELIGGVMIQIGDRVMDGTVAFKLQRIRQSLSHA.

This sequence belongs to the ATPase delta chain family. As to quaternary structure, F-type ATPases have 2 components, F(1) - the catalytic core - and F(0) - the membrane proton channel. F(1) has five subunits: alpha(3), beta(3), gamma(1), delta(1), epsilon(1). F(0) has three main subunits: a(1), b(2) and c(10-14). The alpha and beta chains form an alternating ring which encloses part of the gamma chain. F(1) is attached to F(0) by a central stalk formed by the gamma and epsilon chains, while a peripheral stalk is formed by the delta and b chains.

The protein localises to the cell membrane. In terms of biological role, f(1)F(0) ATP synthase produces ATP from ADP in the presence of a proton or sodium gradient. F-type ATPases consist of two structural domains, F(1) containing the extramembraneous catalytic core and F(0) containing the membrane proton channel, linked together by a central stalk and a peripheral stalk. During catalysis, ATP synthesis in the catalytic domain of F(1) is coupled via a rotary mechanism of the central stalk subunits to proton translocation. This protein is part of the stalk that links CF(0) to CF(1). It either transmits conformational changes from CF(0) to CF(1) or is implicated in proton conduction. This is ATP synthase subunit delta from Desulfitobacterium hafniense (strain DSM 10664 / DCB-2).